Here is a 692-residue protein sequence, read N- to C-terminus: Elongation factor G (692 aa).

Positions 8 to 283 (EKVRNIGIAA…AVVDYLPAPT (276 aa)) constitute a tr-type G domain. GTP is bound by residues 17 to 24 (AHIDAGKT), 81 to 85 (DTPGH), and 135 to 138 (NKMD).

Belongs to the TRAFAC class translation factor GTPase superfamily. Classic translation factor GTPase family. EF-G/EF-2 subfamily.

The protein resides in the cytoplasm. Catalyzes the GTP-dependent ribosomal translocation step during translation elongation. During this step, the ribosome changes from the pre-translocational (PRE) to the post-translocational (POST) state as the newly formed A-site-bound peptidyl-tRNA and P-site-bound deacylated tRNA move to the P and E sites, respectively. Catalyzes the coordinated movement of the two tRNA molecules, the mRNA and conformational changes in the ribosome. The chain is Elongation factor G from Nitratiruptor sp. (strain SB155-2).